Consider the following 462-residue polypeptide: MNENEGISLGELETRPFSEGITRFTKEQAAYYAEQKEKDRIKALKIPYEDSKVREYLRRYGEPITYFGEDALARRQRLQQLMIEKSLEGDNPLDVDQGASENIEKETYVQGSHELLVARKKIALYSLEKAKLRLKKEREISEIPVPEIVLSGKSSIEHLQKAELMGSQIGGERPIAIVRFSNNGNHFASGSWGGQVKVWNSDNLSEVQLFRGHTDRVSGLDWYPLCQAWDADSEQLTLATGAADNTVCLWKASQSTPLLRLEGHLARVGRVAFHPSGDYLVSASFDTTWRLWDVHTGVELLMQEGHSEGIFSIACQPDGSLVSSGGNDAIGRIWDLRSGKSIMVLDEHIRQIVAMAWSPNGYQLATSSADDTVKIWDLRKVSLAHTIPAHSSLVSDVRYIESGVNRFIATSGYDGCVKLWNPLNCSLIKSMVGHEEKVMSVDGYGDRFISSGYDRTIKLWYP.

WD repeat units follow at residues 170–209 (GGER…EVQL), 212–260 (GHTD…PLLR), 263–302 (GHLA…ELLM), 305–344 (GHSE…SIMV), 347–386 (EHIR…LAHT), 389–430 (AHSS…LIKS), and 433–462 (GHEE…LWYP).

The protein resides in the cytoplasm. This is an uncharacterized protein from Schizosaccharomyces pombe (strain 972 / ATCC 24843) (Fission yeast).